Consider the following 151-residue polypeptide: Large ribosomal subunit protein uL15 (151 aa).

The disordered stretch occupies residues 1–51 (MPLKIEDLKPTPGSRKPKKRLGRGIGSGLGKTAGKGHKGEKARGRGKIGRT). Gly residues predominate over residues 23-33 (RGIGSGLGKTA).

Belongs to the universal ribosomal protein uL15 family. In terms of assembly, part of the 50S ribosomal subunit.

In terms of biological role, binds to the 23S rRNA. In Petrotoga mobilis (strain DSM 10674 / SJ95), this protein is Large ribosomal subunit protein uL15.